The primary structure comprises 383 residues: Glutaminyl-peptide cyclotransferase-like protein (383 aa).

A disordered region spans residues 1–25; sequence MPSGGRGRPRLQVGERSLLERPSPP. The chain crosses the membrane as a helical span at residues 35–57; that stretch reads LLPQLLLALTVASVFYTIWRIWH. Cysteine 168 and cysteine 192 are oxidised to a cystine. Position 187 (aspartate 187) interacts with Zn(2+). Glutamate 226 (proton acceptor) is an active-site residue. Position 227 (glutamate 227) interacts with Zn(2+). The active-site Proton acceptor is the aspartate 270. Histidine 352 contributes to the Zn(2+) binding site.

The protein belongs to the glutaminyl-peptide cyclotransferase family.

The protein localises to the golgi apparatus membrane. It catalyses the reaction N-terminal L-glutaminyl-[peptide] = N-terminal 5-oxo-L-prolyl-[peptide] + NH4(+). Functionally, responsible for the biosynthesis of pyroglutamyl peptides. This Bos taurus (Bovine) protein is Glutaminyl-peptide cyclotransferase-like protein (QPCTL).